We begin with the raw amino-acid sequence, 100 residues long: Sec-independent protein translocase protein TatA (100 aa).

Residues 1–21 form a helical membrane-spanning segment; sequence MGALKPWHIAVLVVVLILLFG. Basic and acidic residues predominate over residues 44–55; it reads KSLHDDDRDLAE. The disordered stretch occupies residues 44–100; that stretch reads KSLHDDDRDLAEKANAQAGYQPLPPQVQQEPYPQQTPYQAPPQQQPVVDPVQRARDS. A compositionally biased stretch (low complexity) spans 69 to 81; sequence QVQQEPYPQQTPY.

Belongs to the TatA/E family. As to quaternary structure, the Tat system comprises two distinct complexes: a TatABC complex, containing multiple copies of TatA, TatB and TatC subunits, and a separate TatA complex, containing only TatA subunits. Substrates initially bind to the TatABC complex, which probably triggers association of the separate TatA complex to form the active translocon.

The protein resides in the cell membrane. In terms of biological role, part of the twin-arginine translocation (Tat) system that transports large folded proteins containing a characteristic twin-arginine motif in their signal peptide across membranes. TatA could form the protein-conducting channel of the Tat system. This is Sec-independent protein translocase protein TatA from Salinispora arenicola (strain CNS-205).